A 498-amino-acid chain; its full sequence is Glycerol kinase (498 aa).

Residue threonine 12 coordinates ADP. Threonine 12, threonine 13, and serine 14 together coordinate ATP. Threonine 12 contacts sn-glycerol 3-phosphate. Arginine 16 lines the ADP pocket. The sn-glycerol 3-phosphate site is built by arginine 82, glutamate 83, and tyrosine 134. Glycerol is bound by residues arginine 82, glutamate 83, and tyrosine 134. Residue histidine 230 is modified to Phosphohistidine; by HPr. Aspartate 244 lines the sn-glycerol 3-phosphate pocket. 2 residues coordinate glycerol: aspartate 244 and glutamine 245. Positions 266 and 309 each coordinate ADP. 4 residues coordinate ATP: threonine 266, glycine 309, glutamine 313, and glycine 410. ADP contacts are provided by glycine 410 and asparagine 414.

This sequence belongs to the FGGY kinase family. As to quaternary structure, homotetramer and homodimer (in equilibrium). The phosphoenolpyruvate-dependent sugar phosphotransferase system (PTS), including enzyme I, and histidine-containing protein (HPr) are required for the phosphorylation, which leads to the activation of the enzyme.

The enzyme catalyses glycerol + ATP = sn-glycerol 3-phosphate + ADP + H(+). It participates in polyol metabolism; glycerol degradation via glycerol kinase pathway; sn-glycerol 3-phosphate from glycerol: step 1/1. Activated by phosphorylation and inhibited by fructose 1,6-bisphosphate (FBP). In terms of biological role, key enzyme in the regulation of glycerol uptake and metabolism. Catalyzes the phosphorylation of glycerol to yield sn-glycerol 3-phosphate. This Staphylococcus aureus (strain bovine RF122 / ET3-1) protein is Glycerol kinase.